A 260-amino-acid polypeptide reads, in one-letter code: Exosome complex component Rrp4 (260 aa).

An S1 motif domain is found at 59–128; the sequence is NDVVIGVVIV…SSMKIELALR (70 aa). Residues 136-194 enclose the KH domain; it reads RTGQIVEVEPVKVPRVIGHGGSMISMLKKETNCSIFVGQNGRIWIDGKDEDIELLSKAL.

Belongs to the RRP4 family. As to quaternary structure, component of the archaeal exosome complex. Forms a trimer of Rrp4 and/or Csl4 subunits. The trimer associates with a hexameric ring-like arrangement composed of 3 Rrp41-Rrp42 heterodimers.

The protein resides in the cytoplasm. In terms of biological role, non-catalytic component of the exosome, which is a complex involved in RNA degradation. Increases the RNA binding and the efficiency of RNA degradation. Confers strong poly(A) specificity to the exosome. This Methanosarcina mazei (strain ATCC BAA-159 / DSM 3647 / Goe1 / Go1 / JCM 11833 / OCM 88) (Methanosarcina frisia) protein is Exosome complex component Rrp4.